We begin with the raw amino-acid sequence, 463 residues long: MTLGQFGGLFVVYLISVIFILSLTWMEFRRVRFNFNVLFSLLYLLTFYFGFPFTCVLVFRFGVEVVPVQYLLQAMLSATAFYAVYYVSYKTRLRQKTSVPRAPLLTVNRVEANLTWLLLALIAVATVGIFFLNNGFLLFKLRSYSQIFSSDVSGVALKRFFYFFIPAMLVVYFLRQTQRAWLLFLIGTVAFGMLTYVIVGGTRANLIIAFALFLFIGIVRGWITLWMLVAAGIFGIVGMFWLALKRYGLDVSGDYAFYTFLYLTRDTFSPWENLALLWQNYDKIEFQGLAPIARDFYVFIPSWLWPDRPNLVLNSANYFTWEVLNNHSGLAISPTLLGSLVVMGGVLFIPLGAIAVGLVIKWFDWVYELGKNDSNRYKAAILQAFCFGAVFNIIVLTREGVDSFVSRVVFFCLIFGLCLLVAKLLYWLLESAGLIRQRLRRMRATPLAPTPNTVQDPVIKEQI.

Helical transmembrane passes span 6–26, 39–59, 65–85, 112–132, 154–174, 180–200, 201–221, 222–242, 340–360, 377–397, and 408–428; these read FGGL…LTWM, FSLL…VLVF, VVPV…YAVY, ANLT…IFFL, GVAL…VYFL, AWLL…VIVG, GTRA…IVRG, WITL…MFWL, LVVM…GLVI, YKAA…IVLT, and VVFF…LYWL.

It belongs to the WzyE family. As to quaternary structure, probably part of a complex composed of WzxE, WzyE and WzzE.

The protein resides in the cell inner membrane. Its pathway is bacterial outer membrane biogenesis; enterobacterial common antigen biosynthesis. Functionally, probably involved in the polymerization of enterobacterial common antigen (ECA) trisaccharide repeat units. The sequence is that of Probable ECA polymerase from Pectobacterium atrosepticum (strain SCRI 1043 / ATCC BAA-672) (Erwinia carotovora subsp. atroseptica).